The sequence spans 243 residues: Pyridoxine 5'-phosphate synthase (243 aa).

3-amino-2-oxopropyl phosphate is bound at residue Asn-9. Residue 11–12 participates in 1-deoxy-D-xylulose 5-phosphate binding; the sequence is DH. Arg-20 serves as a coordination point for 3-amino-2-oxopropyl phosphate. His-45 serves as the catalytic Proton acceptor. The 1-deoxy-D-xylulose 5-phosphate site is built by Arg-47 and His-52. Catalysis depends on Glu-72, which acts as the Proton acceptor. Thr-102 is a 1-deoxy-D-xylulose 5-phosphate binding site. His-193 serves as the catalytic Proton donor. 3-amino-2-oxopropyl phosphate is bound by residues Gly-194 and 215 to 216; that span reads GH.

This sequence belongs to the PNP synthase family. As to quaternary structure, homooctamer; tetramer of dimers.

It localises to the cytoplasm. It catalyses the reaction 3-amino-2-oxopropyl phosphate + 1-deoxy-D-xylulose 5-phosphate = pyridoxine 5'-phosphate + phosphate + 2 H2O + H(+). It participates in cofactor biosynthesis; pyridoxine 5'-phosphate biosynthesis; pyridoxine 5'-phosphate from D-erythrose 4-phosphate: step 5/5. In terms of biological role, catalyzes the complicated ring closure reaction between the two acyclic compounds 1-deoxy-D-xylulose-5-phosphate (DXP) and 3-amino-2-oxopropyl phosphate (1-amino-acetone-3-phosphate or AAP) to form pyridoxine 5'-phosphate (PNP) and inorganic phosphate. The sequence is that of Pyridoxine 5'-phosphate synthase from Vibrio parahaemolyticus serotype O3:K6 (strain RIMD 2210633).